A 486-amino-acid chain; its full sequence is Pup--protein ligase (486 aa).

Glu-33 serves as a coordination point for Mg(2+). Position 76 (Arg-76) interacts with ATP. A Mg(2+)-binding site is contributed by Tyr-78. Asp-80 functions as the Proton acceptor in the catalytic mechanism. Glu-86 is a binding site for Mg(2+). 2 residues coordinate ATP: Thr-89 and Trp-451.

Belongs to the Pup ligase/Pup deamidase family. Pup-conjugating enzyme subfamily.

The catalysed reaction is ATP + [prokaryotic ubiquitin-like protein]-L-glutamate + [protein]-L-lysine = ADP + phosphate + N(6)-([prokaryotic ubiquitin-like protein]-gamma-L-glutamyl)-[protein]-L-lysine.. Its pathway is protein degradation; proteasomal Pup-dependent pathway. The protein operates within protein modification; protein pupylation. Its function is as follows. Catalyzes the covalent attachment of the prokaryotic ubiquitin-like protein modifier Pup to the proteasomal substrate proteins, thereby targeting them for proteasomal degradation. This tagging system is termed pupylation. The ligation reaction involves the side-chain carboxylate of the C-terminal glutamate of Pup and the side-chain amino group of a substrate lysine. This chain is Pup--protein ligase, found in Bifidobacterium longum (strain NCC 2705).